The following is a 172-amino-acid chain: Adenine phosphoribosyltransferase (172 aa).

It belongs to the purine/pyrimidine phosphoribosyltransferase family. In terms of assembly, homodimer.

It localises to the cytoplasm. The catalysed reaction is AMP + diphosphate = 5-phospho-alpha-D-ribose 1-diphosphate + adenine. The protein operates within purine metabolism; AMP biosynthesis via salvage pathway; AMP from adenine: step 1/1. Its function is as follows. Catalyzes a salvage reaction resulting in the formation of AMP, that is energically less costly than de novo synthesis. This chain is Adenine phosphoribosyltransferase, found in Streptococcus agalactiae serotype III (strain NEM316).